Reading from the N-terminus, the 252-residue chain is Protein BTG3 (252 aa).

The segment at 138-162 (VTSDYHSGSSSSDEETSKEMEVKPS) is disordered.

Belongs to the BTG family. Ubiquitous. High expression in the ventricular zone of the developing central nervous system. High in ovary, testis, prostate, thymus and lung.

Overexpression impairs serum-induced cell cycle progression from the G0/G1 to S phase. The polypeptide is Protein BTG3 (BTG3) (Homo sapiens (Human)).